The primary structure comprises 416 residues: Glyceraldehyde-3-phosphate dehydrogenase, chloroplastic (416 aa).

The transit peptide at 1–78 (MAFVAPVSSV…APARTSNAPS (78 aa)) directs the protein to the chloroplast. Residues 90–91 (RI), D114, and R158 each bind NADP(+). D-glyceraldehyde 3-phosphate is bound by residues 232–234 (SCT), T263, R278, 291–292 (TG), and R314. Residue C233 is the Nucleophile of the active site. N396 provides a ligand contact to NADP(+).

The protein belongs to the glyceraldehyde-3-phosphate dehydrogenase family. Homotetramer.

The protein resides in the plastid. It is found in the chloroplast. The enzyme catalyses D-glyceraldehyde 3-phosphate + phosphate + NADP(+) = (2R)-3-phospho-glyceroyl phosphate + NADPH + H(+). The protein operates within carbohydrate biosynthesis; Calvin cycle. In Gracilaria gracilis (Red alga), this protein is Glyceraldehyde-3-phosphate dehydrogenase, chloroplastic (GAPA).